The following is a 214-amino-acid chain: Probable nicotinate-nucleotide adenylyltransferase (214 aa).

Belongs to the NadD family.

The catalysed reaction is nicotinate beta-D-ribonucleotide + ATP + H(+) = deamido-NAD(+) + diphosphate. It participates in cofactor biosynthesis; NAD(+) biosynthesis; deamido-NAD(+) from nicotinate D-ribonucleotide: step 1/1. Functionally, catalyzes the reversible adenylation of nicotinate mononucleotide (NaMN) to nicotinic acid adenine dinucleotide (NaAD). This is Probable nicotinate-nucleotide adenylyltransferase from Pseudomonas paraeruginosa (strain DSM 24068 / PA7) (Pseudomonas aeruginosa (strain PA7)).